The primary structure comprises 1888 residues: Tensin-1 (1888 aa).

The span at 21–31 shows a compositional bias: pro residues; the sequence is PQPPGTPPGPA. Residues 21 to 45 are disordered; it reads PQPPGTPPGPARPERCEPGGAAPDP. The segment at 61 to 108 adopts a Phorbol-ester/DAG-type zinc-finger fold; that stretch reads THHFKVKAFKKVKPCGICRQAITREGCVCKVCSFSCHRKCQAKVAAPC. Residues 132-174 are disordered; it reads GEGDCRVGSSPKNLEEGGSMRVSPSIQPQPQSQPTSLSRNTSV. A compositionally biased stretch (low complexity) spans 154-167; sequence SPSIQPQPQSQPTS. The 173-residue stretch at 175–347 folds into the Phosphatase tensin-type domain; sequence SRAMEDSCEL…HYFSGLLSGS (173 aa). In terms of domain architecture, C2 tensin-type spans 352-478; the sequence is NKPLFLHHVI…GKVEFVFSYG (127 aa). Phosphoserine occurs at positions 509 and 535. Residue tyrosine 537 is modified to Phosphotyrosine. 3 disordered regions span residues 543 to 608, 696 to 722, and 789 to 854; these read KDSL…PQEK, VTNT…YSTE, and RSQS…SAET. Position 549 is a phosphoserine (serine 549). The span at 571 to 584 shows a compositional bias: polar residues; sequence LSVSSDSGNSTAST. Residue serine 604 is modified to Phosphoserine. Phosphoserine is present on serine 792. Polar residues predominate over residues 835 to 852; sequence RSPLQSLARSKPSPQLSA. Residue serine 867 is modified to Phosphoserine. 2 disordered regions span residues 893–1077 and 1109–1555; these read PLHK…RSPV and EEME…AGSL. Over residues 905 to 922 the composition is skewed to low complexity; sequence PGASPLSSQPLLGSSRQS. 3 positions are modified to phosphoserine: serine 930, serine 935, and serine 952. The segment covering 962–986 has biased composition (polar residues); that stretch reads GSNQSFHPKSPASSTFLPSPHSSAG. Position 1015 is a phosphothreonine (threonine 1015). Serine 1054 bears the Phosphoserine mark. Residues 1057–1069 are compositionally biased toward polar residues; the sequence is QYENQSPEATSPR. A Phosphotyrosine modification is found at tyrosine 1058. A phosphoserine mark is found at serine 1062, serine 1118, and serine 1122. The span at 1169-1179 shows a compositional bias: basic and acidic residues; sequence EVTKPPEEPRS. Positions 1227–1239 are enriched in low complexity; that stretch reads SPSPLSTSSPILS. Polar residues predominate over residues 1240 to 1257; it reads ADSTSVGSFPSVVSSDQG. Serine 1279 is subject to Phosphoserine. Positions 1284–1300 are enriched in low complexity; sequence SYQSSSPVPVGGSSYNS. A compositionally biased stretch (polar residues) spans 1301-1322; that stretch reads PDYSLQPFSSSPESQGQPQYSA. Serine 1321 is a glycosylation site (O-linked (GalNAc...) serine). At serine 1331 the chain carries Phosphoserine. Threonine 1343 is subject to Phosphothreonine. Serine 1346 carries the post-translational modification Phosphoserine. Threonine 1420 carries the phosphothreonine modification. Position 1423 is a phosphoserine (serine 1423). Residues 1436 to 1446 are compositionally biased toward polar residues; that stretch reads NLASSLHSNAV. 3 positions are modified to phosphoserine: serine 1448, serine 1463, and serine 1468. Residues 1490 to 1507 are compositionally biased toward polar residues; it reads LSRQSSASGYQAPSTPSF. Residues 1518 to 1530 show a composition bias toward low complexity; it reads SSPATSPSPDSAA. A phosphoserine mark is found at serine 1535, serine 1547, serine 1554, and serine 1599. In terms of domain architecture, SH2 spans 1616–1725; the sequence is WYKPEISREQ…ALPCKLVIPS (110 aa). Residue serine 1741 is modified to Phosphoserine. In terms of domain architecture, PTB spans 1751–1885; it reads ACNVLFVNSV…FVSKVMLSAG (135 aa).

It belongs to the PTEN phosphatase protein family. As to quaternary structure, binds to actin filaments and interacts with phosphotyrosine-containing proteins. Interacts with STARD8. Interacts with protein phosphatase PPP1CA. Interacts (via N-terminus) with Rho GTPase-activating protein DLC1; the interaction is decreased by phosphorylation of TNS1. Interacts with tyrosine-phosphorylated proteins BCAR1/p130Cas and PTK2/FAK; the interactions are increased by phosphorylation of TNS1. Post-translationally, extensively phosphorylated on serine and threonine residues in a p38 MAPK-dependent manner which reduces interaction with DLC1 and increases interaction with tyrosine-phosphorylated proteins including BCAR1/p130cas and PTK2/FAK. The majority of the phosphorylated Ser/Thr residues are immediately adjacent to a proline residue. Also phosphorylated on tyrosine residues. In terms of processing, rapidly cleaved by calpain II.

It localises to the cell surface. The protein localises to the cell junction. Its subcellular location is the focal adhesion. The protein resides in the cytoplasm. It is found in the cytoskeleton. Functionally, may act as a protein phosphatase and/or a lipid phosphatase. Involved in fibrillar adhesion formation. Essential for myofibroblast differentiation and myofibroblast-mediated extracellular matrix deposition. Enhances RHOA activation in the presence of DLC1. Plays a role in cell polarization and migration. May be involved in cartilage development and in linking signal transduction pathways to the cytoskeleton. The polypeptide is Tensin-1 (Mus musculus (Mouse)).